Reading from the N-terminus, the 174-residue chain is Calcium-binding protein F (174 aa).

EF-hand domains follow at residues 9 to 44 (KIFQ…KMDG), 60 to 83 (VDMD…EAKK), 92 to 127 (AALA…NGHT), and 133 to 162 (DQVL…RRID). Ca(2+)-binding residues include aspartate 22, asparagine 24, aspartate 26, serine 28, and aspartate 33. Aspartate 105, aspartate 107, aspartate 109, lysine 111, glutamate 116, aspartate 140, aspartate 142, aspartate 144, cysteine 146, and glutamate 151 together coordinate Ca(2+).

The chain is Calcium-binding protein F (cbpF) from Dictyostelium discoideum (Social amoeba).